Consider the following 956-residue polypeptide: UvrABC system protein A (956 aa).

33–40 (GLSGSGKS) lines the ATP pocket. The segment at 252 to 279 (CPYCGFSVGELEPRMFSFNSPFGACPTC) adopts a C4-type zinc-finger fold. ABC transporter domains lie at 309–587 (WRPI…KNSI) and 607–936 (GNGL…KYLK). 639–646 (GVSGSGKS) contacts ATP. The segment at 738–764 (CEACKGDGIIKIEMHFLPDVYVPCEVC) adopts a C4-type zinc-finger fold.

Belongs to the ABC transporter superfamily. UvrA family. As to quaternary structure, forms a heterotetramer with UvrB during the search for lesions.

It localises to the cytoplasm. Its function is as follows. The UvrABC repair system catalyzes the recognition and processing of DNA lesions. UvrA is an ATPase and a DNA-binding protein. A damage recognition complex composed of 2 UvrA and 2 UvrB subunits scans DNA for abnormalities. When the presence of a lesion has been verified by UvrB, the UvrA molecules dissociate. In Listeria innocua serovar 6a (strain ATCC BAA-680 / CLIP 11262), this protein is UvrABC system protein A.